Consider the following 515-residue polypeptide: Galactose/methyl galactoside import ATP-binding protein MglA (515 aa).

ABC transporter domains follow at residues 8–243 and 254–499; these read LEMR…VGRE and IPKE…AKYL. Residue 40-47 participates in ATP binding; the sequence is GENGAGKS.

This sequence belongs to the ABC transporter superfamily. Galactose/methyl galactoside importer (TC 3.A.1.2.3) family. The complex is composed of one ATP-binding protein (MglA), two transmembrane proteins (MglC) and a solute-binding protein (MglB).

The protein resides in the cell membrane. It catalyses the reaction D-galactose(out) + ATP + H2O = D-galactose(in) + ADP + phosphate + H(+). It carries out the reaction methyl beta-D-galactoside(out) + ATP + H2O = methyl beta-D-galactoside(in) + ADP + phosphate + H(+). Functionally, part of the ABC transporter complex MglABC involved in galactose/methyl galactoside import. Responsible for energy coupling to the transport system. This chain is Galactose/methyl galactoside import ATP-binding protein MglA, found in Clostridium perfringens (strain 13 / Type A).